Here is a 480-residue protein sequence, read N- to C-terminus: Molybdate-anion transporter (480 aa).

12 helical membrane passes run 1 to 21 (MFVT…GLEL), 44 to 63 (ATFL…QGPY), 78 to 98 (IAIL…FSGW), 129 to 149 (FVLI…TTTF), 177 to 197 (TWNH…AEWL), 199 to 219 (LGPV…AWFV), 274 to 294 (VMLL…FIFL), 304 to 324 (SPLG…SLLF), 339 to 359 (VLCV…FSTV), 369 to 389 (FLAF…LNFL), 401 to 421 (SVLA…LLAL), and 441 to 461 (FGGC…LFTL).

It belongs to the major facilitator superfamily.

Its subcellular location is the cell membrane. In terms of biological role, mediates high-affinity intracellular uptake of the rare oligo-element molybdenum. This chain is Molybdate-anion transporter (mfsd5), found in Takifugu rubripes (Japanese pufferfish).